Here is a 190-residue protein sequence, read N- to C-terminus: Small ribosomal subunit protein uS4 (190 aa).

In terms of domain architecture, S4 RNA-binding spans 106–178 (RRLQTVVFKH…GRVKRVKRNA (73 aa)). The interval 166-190 (GRPGRVKRVKRNAAKKGSGGGDDDE) is disordered. Residues 169 to 179 (GRVKRVKRNAA) are compositionally biased toward basic residues.

The protein belongs to the universal ribosomal protein uS4 family.

The polypeptide is Small ribosomal subunit protein uS4 (Trypanosoma brucei brucei).